Consider the following 268-residue polypeptide: uncharacterized protein (268 aa).

The RING-type; degenerate zinc-finger motif lies at 21 to 61; the sequence is CVICLQKDGLRAQLSPCGHDQFDYSCICRWMDQSLTCPICK.

The protein resides in the mitochondrion. It localises to the nucleus. This is an uncharacterized protein from Schizosaccharomyces pombe (strain 972 / ATCC 24843) (Fission yeast).